Here is a 935-residue protein sequence, read N- to C-terminus: Isoleucine--tRNA ligase (935 aa).

The short motif at 58–68 (PYANGSIHVGH) is the 'HIGH' region element. An L-isoleucyl-5'-AMP-binding site is contributed by glutamate 558. A 'KMSKS' region motif is present at residues 599–603 (KMSKS). Lysine 602 provides a ligand contact to ATP. Zn(2+) is bound by residues cysteine 897, cysteine 900, cysteine 917, and cysteine 920.

This sequence belongs to the class-I aminoacyl-tRNA synthetase family. IleS type 1 subfamily. As to quaternary structure, monomer. The cofactor is Zn(2+).

The protein localises to the cytoplasm. It carries out the reaction tRNA(Ile) + L-isoleucine + ATP = L-isoleucyl-tRNA(Ile) + AMP + diphosphate. Its function is as follows. Catalyzes the attachment of isoleucine to tRNA(Ile). As IleRS can inadvertently accommodate and process structurally similar amino acids such as valine, to avoid such errors it has two additional distinct tRNA(Ile)-dependent editing activities. One activity is designated as 'pretransfer' editing and involves the hydrolysis of activated Val-AMP. The other activity is designated 'posttransfer' editing and involves deacylation of mischarged Val-tRNA(Ile). The sequence is that of Isoleucine--tRNA ligase from Francisella tularensis subsp. holarctica (strain OSU18).